A 140-amino-acid polypeptide reads, in one-letter code: Nucleoside diphosphate kinase (140 aa).

6 residues coordinate ATP: Lys11, Phe59, Arg87, Thr93, Arg104, and Asn114. His117 serves as the catalytic Pros-phosphohistidine intermediate.

Belongs to the NDK family. Homotetramer. Mg(2+) is required as a cofactor.

It localises to the cytoplasm. The enzyme catalyses a 2'-deoxyribonucleoside 5'-diphosphate + ATP = a 2'-deoxyribonucleoside 5'-triphosphate + ADP. The catalysed reaction is a ribonucleoside 5'-diphosphate + ATP = a ribonucleoside 5'-triphosphate + ADP. Functionally, major role in the synthesis of nucleoside triphosphates other than ATP. The ATP gamma phosphate is transferred to the NDP beta phosphate via a ping-pong mechanism, using a phosphorylated active-site intermediate. This chain is Nucleoside diphosphate kinase, found in Rickettsia canadensis (strain McKiel).